The primary structure comprises 1330 residues: Fanconi anemia group I protein homolog (1330 aa).

Lysine 522 participates in a covalent cross-link: Glycyl lysine isopeptide (Lys-Gly) (interchain with G-Cter in ubiquitin). Position 555 is a phosphoserine (serine 555). Residue threonine 558 is modified to Phosphothreonine. Residue serine 729 is modified to Phosphoserine. At threonine 948 the chain carries Phosphothreonine. Residue serine 1122 is modified to Phosphoserine. The segment at glutamate 1299–serine 1330 is disordered. Positions alanine 1321 to serine 1330 are enriched in basic residues.

Belongs to the Fanconi anemia group I protein family. Homodimer. Part of a FANCI-FANCD2 heterodimeric complex that binds and scans dsDNA for DNA damage. Interacts with FANCL. Interacts with MTMR15/FAN1. Interacts with POLN. Interacts with UBL5; the interaction promotes FANCI homodimerization. In terms of processing, monoubiquitinated by FANCL on Lys-522 during S phase and upon genotoxic stress. Deubiquitinated by USP1 as cells enter G2/M, or once DNA repair is completed. Monoubiquitination requires the FANCA-FANCB-FANCC-FANCE-FANCF-FANCG-FANCM complex. Ubiquitination is required for binding to chromatin, DNA repair, and normal cell cycle progression. Monoubiquitination is stimulated by DNA-binding. Post-translationally, phosphorylated in response to DNA damage by ATM and/or ATR. Phosphorylation of FANCI promotes ubiquitination of FANCD2, which prevents DNA release from the FANCI-FANCD2 complex.

It localises to the nucleus. The protein localises to the cytoplasm. Plays an essential role in the repair of DNA double-strand breaks by homologous recombination and in the repair of interstrand DNA cross-links (ICLs) by promoting FANCD2 monoubiquitination by FANCL and participating in recruitment to DNA repair sites. The FANCI-FANCD2 complex binds and scans double-stranded DNA (dsDNA) for DNA damage; this complex stalls at DNA junctions between double-stranded DNA and single-stranded DNA. Participates in S phase and G2 phase checkpoint activation upon DNA damage. The polypeptide is Fanconi anemia group I protein homolog (Fanci) (Mus musculus (Mouse)).